Consider the following 141-residue polypeptide: Large ribosomal subunit protein uL11 (141 aa).

The protein belongs to the universal ribosomal protein uL11 family. Part of the ribosomal stalk of the 50S ribosomal subunit. Interacts with L10 and the large rRNA to form the base of the stalk. L10 forms an elongated spine to which L12 dimers bind in a sequential fashion forming a multimeric L10(L12)X complex. One or more lysine residues are methylated.

Forms part of the ribosomal stalk which helps the ribosome interact with GTP-bound translation factors. This Streptococcus thermophilus (strain CNRZ 1066) protein is Large ribosomal subunit protein uL11.